The following is a 151-amino-acid chain: MKIVIQRVKSASVSIDGVIKGKINQGFLLLVGVEDADSNFDLDYAVRKIAQMRIFSDEADKMNLSVQDIQGEILSISQFTLYAETKKGNRPSFSAAGKPDFAKAMYEKFNDSLAQIVPVKAGVFGADMQVELINDGPVTIILDTKEARKNA.

Residues 136-137 (GP) carry the Gly-cisPro motif, important for rejection of L-amino acids motif.

The protein belongs to the DTD family. In terms of assembly, homodimer.

The protein resides in the cytoplasm. It catalyses the reaction glycyl-tRNA(Ala) + H2O = tRNA(Ala) + glycine + H(+). The enzyme catalyses a D-aminoacyl-tRNA + H2O = a tRNA + a D-alpha-amino acid + H(+). In terms of biological role, an aminoacyl-tRNA editing enzyme that deacylates mischarged D-aminoacyl-tRNAs. Also deacylates mischarged glycyl-tRNA(Ala), protecting cells against glycine mischarging by AlaRS. Acts via tRNA-based rather than protein-based catalysis; rejects L-amino acids rather than detecting D-amino acids in the active site. By recycling D-aminoacyl-tRNA to D-amino acids and free tRNA molecules, this enzyme counteracts the toxicity associated with the formation of D-aminoacyl-tRNA entities in vivo and helps enforce protein L-homochirality. This is D-aminoacyl-tRNA deacylase from Lactococcus lactis subsp. lactis (strain IL1403) (Streptococcus lactis).